The sequence spans 1100 residues: Sorbin and SH3 domain-containing protein 2 (1100 aa).

Phosphoserine occurs at positions 13, 14, 27, 28, 30, and 43. Residues 30–52 (SLDSTDTYPQHAQSLDGTTSSSI) show a composition bias toward polar residues. The tract at residues 30–57 (SLDSTDTYPQHAQSLDGTTSSSIPLYRS) is disordered. The SoHo domain occupies 66-127 (VIKAPHYPGI…YNTPYTYNAG (62 aa)). The span at 134-147 (SAQSHPAAKTQTYR) shows a compositional bias: polar residues. The segment at 134-311 (SAQSHPAAKT…SPSRAKGGDD (178 aa)) is disordered. H153 carries the post-translational modification Alanine amide. Phosphoserine occurs at positions 154 and 157. Residues 167–180 (PVPPPHVPPPVPPL) show a composition bias toward pro residues. Positions 181 to 217 (RPRDRSSTEKHDWDPPDRKVDTRKFRSEPRSIFEYEP) are enriched in basic and acidic residues. A phosphothreonine mark is found at S234 and I236. S239, S245, S248, K258, S259, and E260 each carry phosphoserine. Phosphothreonine is present on residues T277, G280, and V282. S287 is subject to Phosphoserine. The segment covering 287-304 (SSTTLTKSFTSSSPSSPS) has biased composition (low complexity). T292 carries the phosphothreonine modification. Phosphoserine occurs at positions 295, 297, 298, 299, 301, 302, 304, 306, 311, and 316. 3 positions are modified to phosphothreonine: S320, S322, and G326. Residues H341, V344, and R346 each carry the phosphoserine modification. A Phosphothreonine modification is found at E366. 2 positions are modified to phosphoserine: S381 and S383. A phosphothreonine mark is found at D413 and K415. Phosphoserine is present on residues R437 and R439. Position 459 is a phosphothreonine (I459). 5 positions are modified to phosphoserine: K474, S494, S497, S550, and S750. Residues 807–866 (RMPRSASFQDVDTANSSCHHQDRGGALQDRESPRSYSSTLTDMGRSAPRERRGTPEKEKL) are disordered. Over residues 812–824 (ASFQDVDTANSSC) the composition is skewed to polar residues. The span at 825–839 (HHQDRGGALQDRESP) shows a compositional bias: basic and acidic residues. At S843 the chain carries Phosphoserine. Over residues 853 to 866 (APRERRGTPEKEKL) the composition is skewed to basic and acidic residues. 2 consecutive SH3 domains span residues 863-922 (KEKL…KLTP) and 938-999 (GEIG…VVKK). 2 positions are modified to phosphoserine: S1017 and S1023. The 60-residue stretch at 1041–1100 (GGGEPFQALYNYTPRNEDELELRESDVIDVMEKCDDGWFVGTSRRTKFFGTFPGNYVKRL) folds into the SH3 3 domain.

Interacts with ABL, CBL, DNM1, DNM2, FLOT1, AFDN, PTK2B/PYK2, SAPAP, SPTAN1, SYNJ1, SYNJ2, VCL/vinculin and WASF. Interacts with ABL1/c-Abl, ABL2/v-Abl/Arg, ACTN, CBL and PALLD. Interacts with PTPN12 and WASF1 via its SH3 domains; this interaction may mediate the partial PTPN12 and WASF1 translocation to focal adhesion sites. Post-translationally, ubiquitinated by CBL. Dephosphorylated by PTPN12. Abundantly expressed in heart. In cardiac muscle cells, located in the Z-disks of sarcomere. Also found, but to a lower extent, in small and large intestine, pancreas, thymus, colon, spleen, prostate, testis, brain, ovary and epithelial cells. In the pancreas, mainly expressed in acinar cells, duct cells and all cell types in islets (at protein level). Tends to be down-regulated in pancreatic adenocarcinomas ans metastases.

It is found in the cytoplasm. It localises to the perinuclear region. The protein resides in the apical cell membrane. Its subcellular location is the cell junction. The protein localises to the focal adhesion. It is found in the cell projection. It localises to the lamellipodium. In terms of biological role, adapter protein that plays a role in the assembling of signaling complexes, being a link between ABL kinases and actin cytoskeleton. Can form complex with ABL1 and CBL, thus promoting ubiquitination and degradation of ABL1. May play a role in the regulation of pancreatic cell adhesion, possibly by acting on WASF1 phosphorylation, enhancing phosphorylation by ABL1, as well as dephosphorylation by PTPN12. Isoform 6 increases water and sodium absorption in the intestine and gall-bladder. The polypeptide is Sorbin and SH3 domain-containing protein 2 (SORBS2) (Homo sapiens (Human)).